The following is a 511-amino-acid chain: ATP synthase subunit alpha (511 aa).

169-176 (GDRQTGKT) provides a ligand contact to ATP.

Belongs to the ATPase alpha/beta chains family. F-type ATPases have 2 components, CF(1) - the catalytic core - and CF(0) - the membrane proton channel. CF(1) has five subunits: alpha(3), beta(3), gamma(1), delta(1), epsilon(1). CF(0) has three main subunits: a(1), b(2) and c(9-12). The alpha and beta chains form an alternating ring which encloses part of the gamma chain. CF(1) is attached to CF(0) by a central stalk formed by the gamma and epsilon chains, while a peripheral stalk is formed by the delta and b chains.

It is found in the cell inner membrane. The enzyme catalyses ATP + H2O + 4 H(+)(in) = ADP + phosphate + 5 H(+)(out). In terms of biological role, produces ATP from ADP in the presence of a proton gradient across the membrane. The alpha chain is a regulatory subunit. This Paracoccus denitrificans (strain Pd 1222) protein is ATP synthase subunit alpha.